Consider the following 307-residue polypeptide: Nucleotide-binding protein AAur_2084 (307 aa).

The segment at 1 to 21 (MDEATAKSGTEQDGLTPVKPP) is disordered. ATP is bound at residue 30–37 (GMSGAGRS). 81-84 (DVRS) is a GTP binding site.

It belongs to the RapZ-like family.

In terms of biological role, displays ATPase and GTPase activities. The protein is Nucleotide-binding protein AAur_2084 of Paenarthrobacter aurescens (strain TC1).